The primary structure comprises 274 residues: Glutamate--cysteine ligase regulatory subunit (274 aa).

Ser59 carries the phosphoserine modification. Lys263 is subject to N6-acetyllysine.

Belongs to the aldo/keto reductase family. Glutamate--cysteine ligase light chain subfamily. Heterodimer of a catalytic heavy chain and a regulatory light chain.

Its pathway is sulfur metabolism; glutathione biosynthesis; glutathione from L-cysteine and L-glutamate: step 1/2. This chain is Glutamate--cysteine ligase regulatory subunit (Gclm), found in Mus musculus (Mouse).